The primary structure comprises 2194 residues: MKRKERIARRLEGIETDTQPILLQSCTGLVTHRLLEEDTPRYMRATDPASPHIGRSNEEEETSDSSLEKQTRSKQCTETSGIHADSPYSSGIMDTQSLESKAERIARYKAERRRQLAEKYGLTLDPEADSETPSRYSRSRKDPEAAEKRGVRSERSAESSRDAGSSYSRTELSGLRTCVAESKDYGLHRSDGVSDTEVLLNAENQRRGQEPSATGLARDLPLAGEVSSSFSFSGRDSALGEVPRSPKAVHSLPSPSPGQPASPSHSTSDLPLPAEARASIGKPKHEWFLQKDSEGDTPSLINWPSRVKVREKLVREESARSSPELTSESLTQRRHQTAPGHYLAFQSENSAFDRVSGKVASSARQPIRGYVQPAEPVHTITLVTSDTPESISEGSWVGPAPQTVTKPPPSKVLEGERRDTPVLHICESKAEDVLFSDALEKTRKTLAVLEDRGSGRSQEAPSGTEDLSQPAVGIVTAEPQKESESLAHPPMAQQQPTERMGRSEMVMYVQSEAVSQGHRKEVPTRKHRVLTRSLSDYTGPPQLQALKAKAPAPKRDAESQTSKAELELGLLDTKVSVAQLRNAFLESARASRKPELHSRVEGSSEGPGVERERGSRKPRRYFSPGENRKTSERFRTQPITSAERKESDRSTSNSEMPAAEDEEKVDERARLSVAAKRLLFREMEKSFDEKSVPKRRSRNAAVEQRLRRLQDRSHTQPVTTEEVVIAAEPTPASCSVATHPVMTRHPSPTVAKSPVQPARTLQASAHQKALARDQTNESKDSAEQGEPDSSTLSLAEKLALFNKLSQPVSKAISTRNRLDMRQRRMNARYQTQPVTLGEVEQVQSGKLMAFSPTINTSVSTVASTVPPMYAGNLRTKPLPDDSFGATEQKFASSLENSDSPVRSILKSQGWQPSVEGAGSKAMLREFEETERKGGLTGGDGGVTKYGSFEEAELSYPVLSRVREGDNHKEAIYALPRKGSLELAHPPIAQLGDDLKEFSTPKSTMQASPDWKERQLFEEKVDLENVTKRKFSLKAAEFGEPTSEQTGAAAGKPAAPTATPVSWKPQDPSEQPQEKRYQSPCAMFAAGEIKAPAVEGSLDSPSKTMSIKERLALLKKSGEEDWRNRLNRKQEYGKASITSSLHIQETEQSLKKKRVTESRESQMTIEERKHLITVREDAWKTRGKGAANDSTQFTVAGRMVKRGLASPTAITPVASPVSSKARGTTPVSRPLEDIEARPDMQLESDLKLDRLETFLRRLNNKVGGMQETVLTVTGKSVKEVMKPDDDETFAKFYRSVDSSLPRSPVELDEDFDVIFDPYAPRLTSSVAEHKRAVRPKRRVQASKNPLKMLAAREDLLQEYTEQRLNVAFVESKRMKVEKLSANSSFSEVTLAGLASKENFSNVSLRSVNLTEQNSNNSAVPYKKLMLLQVKGRRHVQTRLVEPRAPSLNSGDCFLLLSPHHCFLWVGEFANVIEKAKASELASLIQTKRELGCRATYIQTVEEGINTHTHAAKDFWKLLGGQASYQSAGDPKEDELYETAIIETNCIYRLMDDKLVPDDDYWGKIPKCSLLQSKEVLVFDFGSEVYVWHGKEVTLAQRKIAFQLAKHLWNGTFDYENCDINPLDPGECNPLIPRKGQGRPDWAIFGRLTEHNETILFKEKFLDWTELKRPNEKNASELAQHKDDARAEVKPYDVTRMVPVPQTTAGTVLDGVNVGRGYGLVEGDDRRQFEIASISVDVWHILEFDYSRLPKQSIGQFHEGDAYVVKWKFIVSTAVGSRQKGEHSVRVAGKEKCVYFFWQGRQSTVSEKGTSALMTVELDEERGAQVQVLQGKEPPCFLQCFQGGMVVHSGRREEEEENTQSEWRLYCVRGEVPVEGNLLEVACHCSSLRSRTSMVVLNVHKALIYLWHGCKAQAHTKEVGRTAANKIKDQCPLEAGLHSSSKVTIHECDEGSEPLGFWDALGRRDRKAYDCMLQDPGNFNFTPRLFILSSSSGDFSATEFMYPARDPSVVNSMPFLQEDLYSAPQPALFLVDNHHEVYLWQGWWPIENKITGSARIRWASDRKSAMETVLQYCRGKNLKKPPPKSYLIHAGLEPLTFTNMFPSWEHREDIAEITEMDTEVSNQITLVEDVLAKLCKTIYPLADLLARPLPEGVDPLKLEIYLTDEDFEFALDMTRDEYNALPAWKQVNLKKAKGLF.

The segment at 1–174 (MKRKERIARR…SSYSRTELSG (174 aa)) is interaction with MYLK. Disordered regions lie at residues 35–98 (LEED…TQSL), 118–335 (EKYG…QRRH), 388–414 (PESI…KVLE), 450–500 (EDRG…TERM), 513–563 (AVSQ…QTSK), 589–667 (RASR…KVDE), 685–719 (KSFD…QPVT), and 739–791 (HPVM…DSST). Ser-50 carries the post-translational modification Phosphoserine. Polar residues predominate over residues 87-98 (PYSSGIMDTQSL). 2 stretches are compositionally biased toward basic and acidic residues: residues 139–161 (SRKD…ESSR) and 181–192 (ESKDYGLHRSDG). Phosphoserine occurs at positions 245 and 262. Basic and acidic residues-rich tracts occupy residues 283 to 294 (PKHEWFLQKDSE) and 308 to 319 (KVREKLVREESA). Over residues 320-330 (RSSPELTSESL) the composition is skewed to polar residues. A phosphoserine mark is found at Ser-321 and Ser-322. A compositionally biased stretch (polar residues) spans 455–467 (GRSQEAPSGTEDL). Residues 540–551 (PPQLQALKAKAP) show a composition bias toward low complexity. Basic and acidic residues-rich tracts occupy residues 592 to 615 (RKPE…ERGS) and 626 to 635 (ENRKTSERFR). Ser-652 and Ser-686 each carry phosphoserine. Residues 704–714 (QRLRRLQDRSH) show a composition bias toward basic and acidic residues. A phosphoserine mark is found at Ser-747 and Ser-781. Positions 770–782 (LARDQTNESKDSA) are enriched in basic and acidic residues. The residue at position 829 (Tyr-829) is a Phosphotyrosine. A Phosphothreonine modification is found at Thr-831. A phosphoserine mark is found at Ser-893, Ser-899, Ser-903, Ser-947, Ser-979, and Ser-1031. A disordered region spans residues 1036–1077 (EFGEPTSEQTGAAAGKPAAPTATPVSWKPQDPSEQPQEKRYQ). The span at 1045–1059 (TGAAAGKPAAPTATP) shows a compositional bias: low complexity. Phosphoserine is present on residues Ser-1099 and Ser-1205. Phosphothreonine is present on Thr-1210. Phosphoserine is present on residues Ser-1214, Ser-1302, and Ser-1385. The interaction with NEB stretch occupies residues 1399–1667 (SNVSLRSVNL…KFLDWTELKR (269 aa)). Gelsolin-like repeat units follow at residues 1421–1520 (KKLM…LGGQ), 1540–1662 (IETN…FLDW), 1732–1842 (ISVD…FQGG), 1861–1962 (WRLY…LGRR), and 1995–2102 (ATEF…FPSW). An HP domain is found at 2131-2194 (KLCKTIYPLA…VNLKKAKGLF (64 aa)).

It belongs to the villin/gelsolin family. In terms of assembly, associates with F-actin. Interacts with NEB. Interacts with MYH9. Interacts with MYLK. Interacts with TASOR. As to quaternary structure, interacts with TRIP6 and DYNLT1. Interacts with KIF14; at midbody during cytokinesis.

It is found in the cell membrane. Its subcellular location is the cytoplasm. It localises to the cytoskeleton. The protein resides in the cell projection. The protein localises to the invadopodium. It is found in the podosome. Its subcellular location is the midbody. It localises to the cleavage furrow. Functionally, forms a high-affinity link between the actin cytoskeleton and the membrane. Is among the first costameric proteins to assemble during myogenesis and it contributes to myogenic membrane structure and differentiation. Appears to be involved in myosin II assembly. May modulate myosin II regulation through MLCK during cell spreading, an initial step in cell migration. May play a role in invadopodial function. Its function is as follows. May be involved in modulation of focal adhesions. Supervillin-mediated down-regulation of focal adhesions involves binding to TRIP6. Plays a role in cytokinesis through KIF14 interaction. This chain is Supervillin, found in Bos taurus (Bovine).